The primary structure comprises 574 residues: Proline--tRNA ligase (574 aa).

This sequence belongs to the class-II aminoacyl-tRNA synthetase family. ProS type 1 subfamily. Homodimer.

It is found in the cytoplasm. The enzyme catalyses tRNA(Pro) + L-proline + ATP = L-prolyl-tRNA(Pro) + AMP + diphosphate. Catalyzes the attachment of proline to tRNA(Pro) in a two-step reaction: proline is first activated by ATP to form Pro-AMP and then transferred to the acceptor end of tRNA(Pro). As ProRS can inadvertently accommodate and process non-cognate amino acids such as alanine and cysteine, to avoid such errors it has two additional distinct editing activities against alanine. One activity is designated as 'pretransfer' editing and involves the tRNA(Pro)-independent hydrolysis of activated Ala-AMP. The other activity is designated 'posttransfer' editing and involves deacylation of mischarged Ala-tRNA(Pro). The misacylated Cys-tRNA(Pro) is not edited by ProRS. In Nitratidesulfovibrio vulgaris (strain ATCC 29579 / DSM 644 / CCUG 34227 / NCIMB 8303 / VKM B-1760 / Hildenborough) (Desulfovibrio vulgaris), this protein is Proline--tRNA ligase.